A 640-amino-acid polypeptide reads, in one-letter code: Pleckstrin homology-like domain family B member 3 (640 aa).

Disordered regions lie at residues 1-100, 162-189, 241-262, 387-412, and 476-504; these read MGTR…AARR, LEQQAASEQRGRQQREQEQRRLSQERDR, LERESRQEEEDRDSPGPQVPDP, GLQRTGSLPRKRGERGSQRGSPRPLS, and REGTRRGTEGSSGPAVPAITAPPTPPHPP. Residues 76–90 are compositionally biased toward low complexity; that stretch reads PPIAMAATPPASTSS. The stretch at 104 to 327 forms a coiled coil; sequence QQLEALTRVA…ERSRLLELNC (224 aa). Positions 170 to 189 are enriched in basic and acidic residues; sequence QRGRQQREQEQRRLSQERDR. The stretch at 454-481 forms a coiled coil; the sequence is DIAHMERLLQQAMAERERLLKAREGTRR. Positions 495–504 are enriched in pro residues; sequence TAPPTPPHPP. Residues 532-635 enclose the PH domain; the sequence is GCCCRGPLVK…WMDVIVTAAD (104 aa).

This is Pleckstrin homology-like domain family B member 3 (PHLDB3) from Homo sapiens (Human).